The chain runs to 907 residues: Probable ubiquitin-conjugating enzyme E2 24 (907 aa).

Disordered stretches follow at residues 1 to 23 and 485 to 509; these read MEMS…EHEE and SSTV…EASS. Over residues 495-509 the composition is skewed to polar residues; it reads QDLSQKISQSDEASS. Residues 662–822 enclose the UBC core domain; it reads SWVKKVQQEW…AFLITCKSMI (161 aa). The active-site Glycyl thioester intermediate is the cysteine 748.

It belongs to the ubiquitin-conjugating enzyme family. As to quaternary structure, interacts with PHO1. Interacts with NLA. In terms of tissue distribution, expressed in the vascular tissues of cotyledons, leaves, roots, sepals, filaments, anthers and junctions between the inflorescence stems and siliques.

Its subcellular location is the golgi apparatus membrane. It localises to the endoplasmic reticulum membrane. It catalyses the reaction S-ubiquitinyl-[E1 ubiquitin-activating enzyme]-L-cysteine + [E2 ubiquitin-conjugating enzyme]-L-cysteine = [E1 ubiquitin-activating enzyme]-L-cysteine + S-ubiquitinyl-[E2 ubiquitin-conjugating enzyme]-L-cysteine.. Its pathway is protein modification; protein ubiquitination. Functionally, E2 ubiquitin-protein ligase that mediates E1-dependent protein ubiquitination. Mediates PHO1 degradation through multivesicular body-mediated vacuolar proteolysis in response to inorganic phosphate (Pi) availability. Negatively regulates the protein abundance of PHF1 and PHT1s under Pi-sufficient conditions by facilitating the degradation of PHT1 proteins at the endomembrane. Functions cooperatively with NLA to regulate the abundance of the inorganic phosphate (Pi) transporters PHT1-1, PHT1-2 and PHT1-3 in different subcellular compartments. Regulates Pi homeostasis by mediating, cooperatively with NLA, polyubiquitination of PHT1-4 and its targeting for degradation. The sequence is that of Probable ubiquitin-conjugating enzyme E2 24 from Arabidopsis thaliana (Mouse-ear cress).